Here is a 388-residue protein sequence, read N- to C-terminus: Succinyl-diaminopimelate desuccinylase (388 aa).

Zn(2+) is bound at residue histidine 72. Aspartate 74 is a catalytic residue. Residue aspartate 105 coordinates Zn(2+). Glutamate 139 (proton acceptor) is an active-site residue. Zn(2+) contacts are provided by glutamate 140, glutamate 168, and histidine 353.

This sequence belongs to the peptidase M20A family. DapE subfamily. As to quaternary structure, homodimer. Zn(2+) serves as cofactor. Requires Co(2+) as cofactor.

The catalysed reaction is N-succinyl-(2S,6S)-2,6-diaminopimelate + H2O = (2S,6S)-2,6-diaminopimelate + succinate. It functions in the pathway amino-acid biosynthesis; L-lysine biosynthesis via DAP pathway; LL-2,6-diaminopimelate from (S)-tetrahydrodipicolinate (succinylase route): step 3/3. In terms of biological role, catalyzes the hydrolysis of N-succinyl-L,L-diaminopimelic acid (SDAP), forming succinate and LL-2,6-diaminopimelate (DAP), an intermediate involved in the bacterial biosynthesis of lysine and meso-diaminopimelic acid, an essential component of bacterial cell walls. The protein is Succinyl-diaminopimelate desuccinylase of Orientia tsutsugamushi (strain Ikeda) (Rickettsia tsutsugamushi).